The sequence spans 138 residues: Cell division protein SepF (138 aa).

The protein belongs to the SepF family. Homodimer. Interacts with FtsZ.

The protein resides in the cytoplasm. In terms of biological role, cell division protein that is part of the divisome complex and is recruited early to the Z-ring. Probably stimulates Z-ring formation, perhaps through the cross-linking of FtsZ protofilaments. Its function overlaps with FtsA. This chain is Cell division protein SepF, found in Limosilactobacillus reuteri (strain DSM 20016) (Lactobacillus reuteri).